The sequence spans 418 residues: E3 ubiquitin-protein ligase pellino homolog 1 (418 aa).

In terms of domain architecture, FHA; atypical spans 13–200; sequence APVKYGELIV…MHPRNGFTED (188 aa). S121 is modified (phosphoserine; by ATM). Phosphothreonine; by ATM is present on T127. The interval 311–399 is ring-like domain; necessary for ubiqitination of RIPK3; that stretch reads CGHVHGYHNW…TFHAACPFCA (89 aa).

Belongs to the pellino family. In terms of assembly, interacts with MAP3K7. Upon IL1B treatment, forms a complex with TRAF6, IRAK1, IRAK4 and MYD88; this complex recruits MAP3K7/TAK1, TAB1 and TAB2 to mediate NF-kappa-B activation. Direct binding of SMAD6 to PELI1 prevents the complex formation and hence negatively regulates IL1R-TLR signaling and eventually NF-kappa-B-mediated gene expression. Interacts (via atypical FHA domain) with RIPK3; preferentially binds to the 'Thr-182' phosphorylated form of RIPK3. Interacts with RIPK1 and IRAK1. Phosphorylation by IRAK1 and IRAK4 enhances its E3 ligase activity. Phosphorylated by ATM in response to DNA damage, promoting localization to DNA double-strand breaks (DSBs) and ability to mediate 'Lys-63'-linked ubiquitination of NBN. Post-translationally, sumoylated. As to expression, expressed at high levels in normal skin but decreased in keratinocytes from toxic epidermal necrolysis (TEN) patients (at protein level).

It localises to the chromosome. The catalysed reaction is S-ubiquitinyl-[E2 ubiquitin-conjugating enzyme]-L-cysteine + [acceptor protein]-L-lysine = [E2 ubiquitin-conjugating enzyme]-L-cysteine + N(6)-ubiquitinyl-[acceptor protein]-L-lysine.. The protein operates within protein modification; protein ubiquitination. E3 ubiquitin ligase catalyzing the covalent attachment of ubiquitin moieties onto substrate proteins. Involved in the TLR and IL-1 signaling pathways via interaction with the complex containing IRAK kinases and TRAF6. Acts as a positive regulator of inflammatory response in microglia through activation of NF-kappa-B and MAP kinase. Mediates 'Lys-63'-linked polyubiquitination of IRAK1 allowing subsequent NF-kappa-B activation. Conjugates 'Lys-63'-linked ubiquitin chains to the adapter protein ASC/PYCARD, which in turn is crucial for NLRP3 inflammasome activation. Mediates 'Lys-48'-linked polyubiquitination of RIPK3 leading to its subsequent proteasome-dependent degradation; preferentially recognizes and mediates the degradation of the 'Thr-182' phosphorylated form of RIPK3. Negatively regulates necroptosis by reducing RIPK3 expression. Mediates 'Lys-63'-linked ubiquitination of RIPK1. Following phosphorylation by ATM, catalyzes 'Lys-63'-linked ubiquitination of NBN, promoting DNA repair via homologous recombination. Negatively regulates activation of the metabolic mTORC1 signaling pathway by mediating 'Lys-63'-linked ubiquitination of mTORC1-inhibitory protein TSC1 and thereby promoting TSC1/TSC2 complex stability. The chain is E3 ubiquitin-protein ligase pellino homolog 1 from Homo sapiens (Human).